Here is a 276-residue protein sequence, read N- to C-terminus: NADPH-dependent 7-cyano-7-deazaguanine reductase (276 aa).

Residue 83-85 (IES) participates in substrate binding. 85–86 (SK) contributes to the NADPH binding site. Cys-184 acts as the Thioimide intermediate in catalysis. Asp-191 serves as the catalytic Proton donor. Residue 223–224 (HE) participates in substrate binding. 252 to 253 (RG) lines the NADPH pocket.

The protein belongs to the GTP cyclohydrolase I family. QueF type 2 subfamily. As to quaternary structure, homodimer.

The protein resides in the cytoplasm. The enzyme catalyses 7-aminomethyl-7-carbaguanine + 2 NADP(+) = 7-cyano-7-deazaguanine + 2 NADPH + 3 H(+). It participates in tRNA modification; tRNA-queuosine biosynthesis. Functionally, catalyzes the NADPH-dependent reduction of 7-cyano-7-deazaguanine (preQ0) to 7-aminomethyl-7-deazaguanine (preQ1). The sequence is that of NADPH-dependent 7-cyano-7-deazaguanine reductase from Pseudomonas paraeruginosa (strain DSM 24068 / PA7) (Pseudomonas aeruginosa (strain PA7)).